Reading from the N-terminus, the 318-residue chain is AT-hook motif nuclear-localized protein 7 (318 aa).

Disordered regions lie at residues 1-76 (METS…PSSS) and 241-318 (SDQQ…LPVD). Residues 56 to 64 (KKRRGRPRK) carry the Bipartite nuclear localization signal motif. The a.T hook DNA-binding region spans 56–68 (KKRRGRPRKYEAN). The 140-residue stretch at 120 to 259 (GSNFTPHVIT…RKQRVEHAPA (140 aa)) folds into the PPC domain. Basic and acidic residues predominate over residues 243 to 256 (QQDHQKPRKQRVEH). The span at 264-274 (VPPPPSPPPPA) shows a compositional bias: pro residues. Polar residues predominate over residues 288–312 (PPSSFGISSWTNGQDMPRNSATDIN).

It localises to the nucleus. Its function is as follows. Transcription factor that specifically binds AT-rich DNA sequences related to the nuclear matrix attachment regions (MARs). This is AT-hook motif nuclear-localized protein 7 from Arabidopsis thaliana (Mouse-ear cress).